Consider the following 405-residue polypeptide: 8-amino-7-oxononanoate synthase 1 (405 aa).

Arg29 is a substrate binding site. 116-117 (GY) contributes to the pyridoxal 5'-phosphate binding site. His141 lines the substrate pocket. The pyridoxal 5'-phosphate site is built by Ser187, His215, and Thr247. An N6-(pyridoxal phosphate)lysine modification is found at Lys250. Residue Thr368 coordinates substrate.

This sequence belongs to the class-II pyridoxal-phosphate-dependent aminotransferase family. BioF subfamily. Homodimer. Requires pyridoxal 5'-phosphate as cofactor.

It carries out the reaction 6-carboxyhexanoyl-[ACP] + L-alanine + H(+) = (8S)-8-amino-7-oxononanoate + holo-[ACP] + CO2. The protein operates within cofactor biosynthesis; biotin biosynthesis. Its function is as follows. Catalyzes the decarboxylative condensation of pimeloyl-[acyl-carrier protein] and L-alanine to produce 8-amino-7-oxononanoate (AON), [acyl-carrier protein], and carbon dioxide. The chain is 8-amino-7-oxononanoate synthase 1 from Polaromonas sp. (strain JS666 / ATCC BAA-500).